We begin with the raw amino-acid sequence, 281 residues long: Feruloyl esterase A (281 aa).

Residues Met1–Ala21 form the signal peptide. Disulfide bonds link Cys50–Cys279, Cys112–Cys115, and Cys248–Cys255. Substrate is bound at residue Asp98. Residue Asn100 is glycosylated (N-linked (GlcNAc...) asparagine). Position 101 (Tyr101) interacts with substrate. Catalysis depends on Ser154, which acts as the Nucleophile. Asp215 functions as the Charge relay system in the catalytic mechanism. A substrate-binding site is contributed by His268. The Charge relay system role is filled by His268.

In terms of processing, glycosylated.

The protein resides in the secreted. It catalyses the reaction feruloyl-polysaccharide + H2O = ferulate + polysaccharide.. With respect to regulation, inhibited by the specific serine esterase inhibitor diisopropylfluorophosphate. Its function is as follows. Involved in degradation of plant cell walls. Hydrolyzes the feruloyl-arabinose ester bond in arabinoxylans, and the feruloyl-galactose ester bond in pectin. Binds to cellulose. The polypeptide is Feruloyl esterase A (faeA) (Aspergillus niger).